Consider the following 154-residue polypeptide: Transcriptional repressor NrdR (154 aa).

The segment at 3–34 (CPFCTHPDTRVADSRLMEERNAVRRRRHCPNC) is a zinc-finger region. The 91-residue stretch at 49–139 (PAVIGPDKKR…LHKRFDNPAD (91 aa)) folds into the ATP-cone domain.

Belongs to the NrdR family. Requires Zn(2+) as cofactor.

Functionally, negatively regulates transcription of bacterial ribonucleotide reductase nrd genes and operons by binding to NrdR-boxes. The protein is Transcriptional repressor NrdR of Neisseria meningitidis serogroup A / serotype 4A (strain DSM 15465 / Z2491).